Reading from the N-terminus, the 362-residue chain is Chorismate synthase (362 aa).

The disordered stretch occupies residues 39 to 59 (ADLQGDLDRRKPGTSRYTTPR). Arg48 and Arg54 together coordinate NADP(+). Residues 125 to 127 (RSS), 238 to 239 (NA), Gly278, 293 to 297 (KPTSS), and Arg319 each bind FMN.

The protein belongs to the chorismate synthase family. As to quaternary structure, homotetramer. FMNH2 serves as cofactor.

It catalyses the reaction 5-O-(1-carboxyvinyl)-3-phosphoshikimate = chorismate + phosphate. It participates in metabolic intermediate biosynthesis; chorismate biosynthesis; chorismate from D-erythrose 4-phosphate and phosphoenolpyruvate: step 7/7. Catalyzes the anti-1,4-elimination of the C-3 phosphate and the C-6 proR hydrogen from 5-enolpyruvylshikimate-3-phosphate (EPSP) to yield chorismate, which is the branch point compound that serves as the starting substrate for the three terminal pathways of aromatic amino acid biosynthesis. This reaction introduces a second double bond into the aromatic ring system. The polypeptide is Chorismate synthase (Aeromonas hydrophila subsp. hydrophila (strain ATCC 7966 / DSM 30187 / BCRC 13018 / CCUG 14551 / JCM 1027 / KCTC 2358 / NCIMB 9240 / NCTC 8049)).